Here is a 385-residue protein sequence, read N- to C-terminus: Cell division protein FtsZ (385 aa).

Residues 37-41 (GGGSN), 125-127 (GTG), Glu156, Lys160, and Asp204 contribute to the GTP site.

It belongs to the FtsZ family. Homodimer. Polymerizes to form a dynamic ring structure in a strictly GTP-dependent manner. Interacts directly with several other division proteins.

The protein resides in the cytoplasm. Functionally, essential cell division protein that forms a contractile ring structure (Z ring) at the future cell division site. The regulation of the ring assembly controls the timing and the location of cell division. One of the functions of the FtsZ ring is to recruit other cell division proteins to the septum to produce a new cell wall between the dividing cells. Binds GTP and shows GTPase activity. The protein is Cell division protein FtsZ of Helicobacter pylori (strain J99 / ATCC 700824) (Campylobacter pylori J99).